The chain runs to 254 residues: UPF0246 protein Fphi_1075 (254 aa).

The protein belongs to the UPF0246 family.

This Francisella philomiragia subsp. philomiragia (strain ATCC 25017 / CCUG 19701 / FSC 153 / O#319-036) protein is UPF0246 protein Fphi_1075.